The following is a 185-amino-acid chain: Ribulose bisphosphate carboxylase small subunit, chloroplastic 2 (185 aa).

The N-terminal 45 residues, 1-45 (MAAVIAKSSVSAAVARPARSSVRPMAALKPAVKAAPVAAPAQANQ), are a transit peptide targeting the chloroplast. At M46 the chain carries N-methylmethionine.

It belongs to the RuBisCO small chain family. As to quaternary structure, heterohexadecamer of 8 large and 8 small subunits.

It localises to the plastid. The protein resides in the chloroplast. It is found in the chloroplast stroma. Functionally, ruBisCO catalyzes two reactions: the carboxylation of D-ribulose 1,5-bisphosphate, the primary event in carbon dioxide fixation, as well as the oxidative fragmentation of the pentose substrate. Both reactions occur simultaneously and in competition at the same active site. Although the small subunit is not catalytic it is essential for maximal activity. The protein is Ribulose bisphosphate carboxylase small subunit, chloroplastic 2 of Chlamydomonas reinhardtii (Chlamydomonas smithii).